We begin with the raw amino-acid sequence, 162 residues long: Sorting nexin-3 (162 aa).

Alanine 2 carries the N-acetylalanine modification. Residues 27-151 (NFLEIDVSNP…HMFLQDEIID (125 aa)) enclose the PX domain. The residue at position 43 (arginine 43) is an Omega-N-methylarginine. 4 residues coordinate a 1,2-diacyl-sn-glycero-3-phospho-(1D-myo-inositol-3-phosphate): arginine 70, serine 72, lysine 95, and arginine 118. The residue at position 72 (serine 72) is a Phosphoserine. Lysine 95 is covalently cross-linked (Glycyl lysine isopeptide (Lys-Gly) (interchain with G-Cter in SUMO2)). Residues 147–162 (DEIIDKSYTPSKIRHA) are binds predominantly to PtdIns(P5) and weaker to PtdIns(P3) abd PtdIns(P4); involved in neurite outgrowth regulation.

It belongs to the sorting nexin family. As to quaternary structure, interacts with VPS26A, VPS29 and VPS35; the interaction with VPS35 is direct. The association with the retromer CSC subcomplex subunits is proposed to represent a functional distinct retromer variant described as SNX3-retromer complex. Interacts with USP10 and SCNN1A. Interacts with TRFC. Interacts with SNX8; 2 molecules of SNX8 seems to associate with one molecule of SNX3. Interacts with PTPRU. Interacts with MON2 and DOP1B. In terms of processing, ubiquitinated, leading to its proteasomal degradation. Deubiquitinated by USP10.

The protein localises to the early endosome. The protein resides in the cytoplasmic vesicle. It localises to the phagosome. Phosphoinositide-binding protein required for multivesicular body formation. Specifically binds phosphatidylinositol 3-phosphate (PtdIns(P3)). Can also bind phosphatidylinositol 4-phosphate (PtdIns(P4)), phosphatidylinositol 5-phosphate (PtdIns(P5)) and phosphatidylinositol 3,5-biphosphate (PtdIns(3,5)P2). Plays a role in protein transport between cellular compartments. Together with RAB7A facilitates endosome membrane association of the retromer cargo-selective subcomplex (CSC/VPS). May in part act as component of the SNX3-retromer complex which mediates the retrograde endosome-to-TGN transport of WLS distinct from the SNX-BAR retromer pathway. Promotes stability and cell surface expression of epithelial sodium channel (ENAC) subunits SCNN1A and SCNN1G. Not involved in EGFR degradation. Involved in the regulation of phagocytosis in dendritic cells possibly by regulating EEA1 recruitment to the nascent phagosomes. Involved in iron homeostasis through regulation of endocytic recycling of the transferrin receptor TFRC presumably by delivering the transferrin:transferrin receptor complex to recycling endosomes; the function may involve the CSC retromer subcomplex. In the case of Salmonella enterica infection plays arole in maturation of the Salmonella-containing vacuole (SCV) and promotes recruitment of LAMP1 to SCVs. The polypeptide is Sorting nexin-3 (Homo sapiens (Human)).